The chain runs to 122 residues: Large ribosomal subunit protein uL14 (122 aa).

The protein belongs to the universal ribosomal protein uL14 family. As to quaternary structure, part of the 50S ribosomal subunit. Forms a cluster with proteins L3 and L19. In the 70S ribosome, L14 and L19 interact and together make contacts with the 16S rRNA in bridges B5 and B8.

Binds to 23S rRNA. Forms part of two intersubunit bridges in the 70S ribosome. The polypeptide is Large ribosomal subunit protein uL14 (Mycoplasma pneumoniae (strain ATCC 29342 / M129 / Subtype 1) (Mycoplasmoides pneumoniae)).